A 461-amino-acid chain; its full sequence is Adenine DNA glycosylase (461 aa).

Glu69 functions as the Proton donor/acceptor in the catalytic mechanism. The [4Fe-4S] cluster site is built by Cys226, Cys233, Cys236, and Cys242. The 142-residue stretch at 296-437 (QREERALVVI…RAALEIKKRK (142 aa)) folds into the Nudix hydrolase domain. Positions 340 to 366 (FGQESWPKDMDAEFQKSIAQWISNDSR) match the Nudix box motif.

The protein belongs to the Nth/MutY family. Monomer. It depends on [4Fe-4S] cluster as a cofactor.

The catalysed reaction is Hydrolyzes free adenine bases from 7,8-dihydro-8-oxoguanine:adenine mismatched double-stranded DNA, leaving an apurinic site.. Its function is as follows. Adenine glycosylase active on G-A mispairs. Has glycosylase and nicking activities and is active at A/G and A/GO sites. The polypeptide is Adenine DNA glycosylase (myh1) (Schizosaccharomyces pombe (strain 972 / ATCC 24843) (Fission yeast)).